The primary structure comprises 350 residues: Nicotinate-nucleotide--dimethylbenzimidazole phosphoribosyltransferase (350 aa).

Glutamate 317 acts as the Proton acceptor in catalysis.

It belongs to the CobT family.

It carries out the reaction 5,6-dimethylbenzimidazole + nicotinate beta-D-ribonucleotide = alpha-ribazole 5'-phosphate + nicotinate + H(+). The protein operates within nucleoside biosynthesis; alpha-ribazole biosynthesis; alpha-ribazole from 5,6-dimethylbenzimidazole: step 1/2. Its function is as follows. Catalyzes the synthesis of alpha-ribazole-5'-phosphate from nicotinate mononucleotide (NAMN) and 5,6-dimethylbenzimidazole (DMB). This chain is Nicotinate-nucleotide--dimethylbenzimidazole phosphoribosyltransferase, found in Shewanella sp. (strain MR-7).